Consider the following 288-residue polypeptide: Bifunctional protein FolD (288 aa).

NADP(+) is bound by residues 166–168 and Ile-232; that span reads GAS.

Belongs to the tetrahydrofolate dehydrogenase/cyclohydrolase family. In terms of assembly, homodimer.

It carries out the reaction (6R)-5,10-methylene-5,6,7,8-tetrahydrofolate + NADP(+) = (6R)-5,10-methenyltetrahydrofolate + NADPH. The enzyme catalyses (6R)-5,10-methenyltetrahydrofolate + H2O = (6R)-10-formyltetrahydrofolate + H(+). It participates in one-carbon metabolism; tetrahydrofolate interconversion. In terms of biological role, catalyzes the oxidation of 5,10-methylenetetrahydrofolate to 5,10-methenyltetrahydrofolate and then the hydrolysis of 5,10-methenyltetrahydrofolate to 10-formyltetrahydrofolate. The polypeptide is Bifunctional protein FolD (Citrobacter koseri (strain ATCC BAA-895 / CDC 4225-83 / SGSC4696)).